Here is a 242-residue protein sequence, read N- to C-terminus: 3-deoxy-manno-octulosonate cytidylyltransferase (242 aa).

The protein belongs to the KdsB family.

The protein resides in the cytoplasm. The catalysed reaction is 3-deoxy-alpha-D-manno-oct-2-ulosonate + CTP = CMP-3-deoxy-beta-D-manno-octulosonate + diphosphate. The protein operates within nucleotide-sugar biosynthesis; CMP-3-deoxy-D-manno-octulosonate biosynthesis; CMP-3-deoxy-D-manno-octulosonate from 3-deoxy-D-manno-octulosonate and CTP: step 1/1. It participates in bacterial outer membrane biogenesis; lipopolysaccharide biosynthesis. Activates KDO (a required 8-carbon sugar) for incorporation into bacterial lipopolysaccharide in Gram-negative bacteria. The polypeptide is 3-deoxy-manno-octulosonate cytidylyltransferase (Mesorhizobium japonicum (strain LMG 29417 / CECT 9101 / MAFF 303099) (Mesorhizobium loti (strain MAFF 303099))).